Reading from the N-terminus, the 962-residue chain is UBP9-binding protein bun107 (962 aa).

WD repeat units follow at residues 25-69 (DANC…GKAS), 77-116 (AHSA…ASCL), 121-162 (EHTD…EVMR), 172-211 (VVGP…RITD), 214-253 (GHTD…CLFS), and 302-339 (KQDA…NQDV). Residues 568–578 (SPLRIRSRPSP) show a composition bias toward low complexity. Disordered stretches follow at residues 568 to 615 (SPLR…QIPS) and 702 to 758 (RAAS…PREL). Over residues 707–723 (RVFSTGTSVTSPQALSK) the composition is skewed to polar residues. Ser717 carries the post-translational modification Phosphoserine. Low complexity predominate over residues 724–738 (TNNTVNNAANTENNT).

In terms of assembly, interacts with ubp9 and bun62.

The protein localises to the cytoplasm. It is found in the cell tip. Functionally, required for the ubp9 recruitment to septa and cell tips but also for its enzymatic activity at these specific locations. This chain is UBP9-binding protein bun107 (bun107), found in Schizosaccharomyces pombe (strain 972 / ATCC 24843) (Fission yeast).